We begin with the raw amino-acid sequence, 467 residues long: MATEYALRMGDGKRVFLTKEKIMAEIEAGTANAADLGDIPALNDNEMDKLAEILMMPGKTVSVEQGMEIPVTHDIGTIRLDGDQGNSGVGIPSSRLVGCMMHERAFGADTMELGHIDYSFKPVKPVVSNECQAMEVCQQNMIIPLFYGAMPNMGLYYTPDGPFENPGDLMKLFKIDKAKESMEHAAEHLTRDTVWVMQKLFASGADGVNFDTTGAAGDGDMYGTLYAIQALRKEFPDMYIEAGMAGEMVLGMHGELEYDGVRLAGSWPHEQAPLIAKAGANVFGPVCNTNTSKTSAWNLARAVTFIKAAVEASPIPCHVNMGMGVGGIPMLETPPIDAVTRASKAMVEIAGVDGIOIGVGDPMGMPISHIMASGMTGIRAAGDLVARMEFSKNMRIGEAKEYVAKKLGVDKMDLVDEHVMRELREELDIGIITSVPGAAKGIAAKMNIEKLLDIKINSCNLFRKQIA.

Position 356 (O356) is a non-standard amino acid, pyrrolysine.

Belongs to the dimethylamine methyltransferase family.

It carries out the reaction Co(I)-[dimethylamine-specific corrinoid protein] + dimethylamine + H(+) = methyl-Co(III)-[dimethylamine-specific corrinoid protein] + methylamine. It participates in one-carbon metabolism; methanogenesis from dimethylamine. Catalyzes the transfer of a methyl group from dimethylamine to the corrinoid cofactor of MtbC. The polypeptide is Dimethylamine methyltransferase MtbB2 (mtbB2) (Methanosarcina barkeri (strain Fusaro / DSM 804)).